A 740-amino-acid polypeptide reads, in one-letter code: Vacuolar protein sorting-associated protein 51 homolog (740 aa).

Coiled coils occupy residues 65-87 (SATD…VNLL) and 322-344 (RALD…LEVQ).

This sequence belongs to the VPS51 family. As to quaternary structure, component of the Golgi-associated retrograde protein (GARP) complex.

Its function is as follows. May act as a component of the GARP complex that is involved in retrograde transport from early and late endosomes to the trans-Golgi network (TGN). This is Vacuolar protein sorting-associated protein 51 homolog from Drosophila melanogaster (Fruit fly).